The following is a 245-amino-acid chain: 1-(5-phosphoribosyl)-5-[(5-phosphoribosylamino)methylideneamino] imidazole-4-carboxamide isomerase (245 aa).

Asp-7 (proton acceptor) is an active-site residue. Asp-129 functions as the Proton donor in the catalytic mechanism.

It belongs to the HisA/HisF family.

It localises to the cytoplasm. The catalysed reaction is 1-(5-phospho-beta-D-ribosyl)-5-[(5-phospho-beta-D-ribosylamino)methylideneamino]imidazole-4-carboxamide = 5-[(5-phospho-1-deoxy-D-ribulos-1-ylimino)methylamino]-1-(5-phospho-beta-D-ribosyl)imidazole-4-carboxamide. It functions in the pathway amino-acid biosynthesis; L-histidine biosynthesis; L-histidine from 5-phospho-alpha-D-ribose 1-diphosphate: step 4/9. This Cronobacter sakazakii (strain ATCC BAA-894) (Enterobacter sakazakii) protein is 1-(5-phosphoribosyl)-5-[(5-phosphoribosylamino)methylideneamino] imidazole-4-carboxamide isomerase.